We begin with the raw amino-acid sequence, 293 residues long: Magnetosome protein MamB (293 aa).

Residues 1–12 (MTTAACRKCRDE) lie on the Cytoplasmic side of the membrane. The tract at residues 1 to 214 (MTTAACRKCR…GLMDTSVEND (214 aa)) is transmembrane domain (TMD). The chain crosses the membrane as a helical span at residues 13–33 (VIWWAFFINIGQTTYKGVLGV). The Lumenal portion of the chain corresponds to 34–78 (LSGSAALVADAMHSGADVVATLVTMFSVKVSDKKADEKYPFGYGN). Residues 79–99 (IQFIASSIVGLILFFGALYLM) form a helical membrane-spanning segment. At 100–105 (YESTMQ) the chain is on the cytoplasmic side. The helical transmembrane segment at 106–126 (IIAGNTSSPSPFAVLGAIVSI) threads the bilayer. Over 127-158 (ATNELMFRYQSCVGRQNNSPAIIANAWDNRSD) the chain is Lumenal. A helical membrane pass occupies residues 159-179 (ALSSVAVLIGIVAAVVGFPIA). Residues 180–293 (DRLAAIGVGI…VGVTPVRIAA (114 aa)) are Cytoplasmic-facing. The interval 215-293 (VLVDAYNIAK…VGVTPVRIAA (79 aa)) is C-terminal domain (CTD). Residues histidine 245, aspartate 247, and histidine 283 each contribute to the Zn(2+) site.

It belongs to the cation diffusion facilitator (CDF) transporter (TC 2.A.4) family. In terms of assembly, the isolated C-terminal domain (approximately 213-293) forms homodimers. Forms heterodimers with MamM.

It localises to the magnetosome membrane. Functionally, plays a dual, essential role in magnetosome formation; required for magnetosome vesicle formation as well as biomineralization. Probably binds and transports iron. Requires heterodimerization with MamM for stability. In Magnetospira sp. (strain QH-2) (Marine magnetic spirillum (strain QH-2)), this protein is Magnetosome protein MamB (mamB).